The chain runs to 248 residues: 1-(5-phosphoribosyl)-5-[(5-phosphoribosylamino)methylideneamino] imidazole-4-carboxamide isomerase (248 aa).

D8 functions as the Proton acceptor in the catalytic mechanism. D129 (proton donor) is an active-site residue.

It belongs to the HisA/HisF family.

The protein localises to the cytoplasm. It catalyses the reaction 1-(5-phospho-beta-D-ribosyl)-5-[(5-phospho-beta-D-ribosylamino)methylideneamino]imidazole-4-carboxamide = 5-[(5-phospho-1-deoxy-D-ribulos-1-ylimino)methylamino]-1-(5-phospho-beta-D-ribosyl)imidazole-4-carboxamide. Its pathway is amino-acid biosynthesis; L-histidine biosynthesis; L-histidine from 5-phospho-alpha-D-ribose 1-diphosphate: step 4/9. This chain is 1-(5-phosphoribosyl)-5-[(5-phosphoribosylamino)methylideneamino] imidazole-4-carboxamide isomerase, found in Rhizobium johnstonii (strain DSM 114642 / LMG 32736 / 3841) (Rhizobium leguminosarum bv. viciae).